The following is a 368-amino-acid chain: Glutamate 5-kinase (368 aa).

Lys-9 serves as a coordination point for ATP. Residues Ser-49, Asp-136, and Asn-148 each contribute to the substrate site. Residues 168–169 (TD) and 210–216 (TGGMMTK) contribute to the ATP site. The PUA domain maps to 275 to 353 (AGIITIDNGA…ADIENVLGYE (79 aa)).

It belongs to the glutamate 5-kinase family.

It is found in the cytoplasm. It catalyses the reaction L-glutamate + ATP = L-glutamyl 5-phosphate + ADP. The protein operates within amino-acid biosynthesis; L-proline biosynthesis; L-glutamate 5-semialdehyde from L-glutamate: step 1/2. In terms of biological role, catalyzes the transfer of a phosphate group to glutamate to form L-glutamate 5-phosphate. The sequence is that of Glutamate 5-kinase from Haemophilus influenzae (strain PittEE).